The following is a 151-amino-acid chain: Zinc finger HIT domain-containing protein 3 (151 aa).

Zn(2+) contacts are provided by Cys-11, Cys-14, Cys-22, Cys-25, Cys-30, Cys-34, His-38, and Cys-42. The segment at 11-42 adopts an HIT-type zinc-finger fold; the sequence is CVVCLEKPKYRCPTCRVPYCSVPCFQKHKEQC. Basic and acidic residues predominate over residues 43-53; the sequence is SSEARPVEKRR. The interval 43–81 is disordered; that stretch reads SSEARPVEKRRAGPPVRSEESKDDDSSVADFLNSDEEED. Over residues 63–81 the composition is skewed to acidic residues; it reads SKDDDSSVADFLNSDEEED. Ser-76 is subject to Phosphoserine.

In terms of assembly, thyroid receptor interacting proteins (TRIPs) specifically interact with the ligand binding domain of the thyroid receptor (TR). Requires the presence of thyroid hormone for its interaction. Interacts with NUFIP1. Interacts (via HIT-type zinc finger) with the RUVBL1/RUVBL2 complex in the presence of ADP. As to expression, expressed in the cerebellum.

It is found in the cytoplasm. Its subcellular location is the nucleus. In Mus musculus (Mouse), this protein is Zinc finger HIT domain-containing protein 3 (Znhit3).